Here is a 300-residue protein sequence, read N- to C-terminus: D-alanine--D-alanine ligase (300 aa).

One can recognise an ATP-grasp domain in the interval 99–293 (KKILKYANIN…FAELLNSIVK (195 aa)). 126–181 (IEKIGYPVFVKPNSGGSSVATNLVKNKEGIKEAVELALKYDKEVMIENYTKGEEIT) serves as a coordination point for ATP. 3 residues coordinate Mg(2+): D248, E260, and N262.

This sequence belongs to the D-alanine--D-alanine ligase family. It depends on Mg(2+) as a cofactor. The cofactor is Mn(2+).

It is found in the cytoplasm. The enzyme catalyses 2 D-alanine + ATP = D-alanyl-D-alanine + ADP + phosphate + H(+). It functions in the pathway cell wall biogenesis; peptidoglycan biosynthesis. Its function is as follows. Cell wall formation. The sequence is that of D-alanine--D-alanine ligase from Clostridium botulinum (strain Loch Maree / Type A3).